Here is a 134-residue protein sequence, read N- to C-terminus: MSNTETANPTAKAVAKHVRVTPMKARRVVDLVRGRSVEDALNILKFAPQAASEPVAKVIASAAANAENNLDLDPSTLVVATAFVDEGATLKRFQPRAQGRAFRIRKRTSHITVIVESLPKTGTSTRNRRKGSAQ.

The protein belongs to the universal ribosomal protein uL22 family. Part of the 50S ribosomal subunit.

Its function is as follows. This protein binds specifically to 23S rRNA; its binding is stimulated by other ribosomal proteins, e.g. L4, L17, and L20. It is important during the early stages of 50S assembly. It makes multiple contacts with different domains of the 23S rRNA in the assembled 50S subunit and ribosome. Functionally, the globular domain of the protein is located near the polypeptide exit tunnel on the outside of the subunit, while an extended beta-hairpin is found that lines the wall of the exit tunnel in the center of the 70S ribosome. In Rhodococcus erythropolis (strain PR4 / NBRC 100887), this protein is Large ribosomal subunit protein uL22.